A 420-amino-acid chain; its full sequence is ATP phosphoribosyltransferase regulatory subunit (420 aa).

Belongs to the class-II aminoacyl-tRNA synthetase family. HisZ subfamily. In terms of assembly, heteromultimer composed of HisG and HisZ subunits.

The protein localises to the cytoplasm. The protein operates within amino-acid biosynthesis; L-histidine biosynthesis; L-histidine from 5-phospho-alpha-D-ribose 1-diphosphate: step 1/9. Functionally, required for the first step of histidine biosynthesis. May allow the feedback regulation of ATP phosphoribosyltransferase activity by histidine. This Bacillus cereus (strain ATCC 10987 / NRS 248) protein is ATP phosphoribosyltransferase regulatory subunit.